A 353-amino-acid polypeptide reads, in one-letter code: 6-phosphogluconolactonase (353 aa).

It belongs to the cycloisomerase 2 family.

It localises to the cytoplasm. The enzyme catalyses 6-phospho-D-glucono-1,5-lactone + H2O = 6-phospho-D-gluconate + H(+). It participates in carbohydrate degradation; pentose phosphate pathway; D-ribulose 5-phosphate from D-glucose 6-phosphate (oxidative stage): step 2/3. In terms of biological role, carboxylic ester hydrolase that may be involved in ulvan degradation. Ulvan is the main polysaccharide component of the Ulvales (green seaweed) cell wall. It is composed of disaccharide building blocks comprising 3-sulfated rhamnose (Rha3S) linked to D-glucuronic acid (GlcA), L-iduronic acid (IduA), or D-xylose (Xyl). Catalyzes the hydrolysis of 6-phosphogluconolactone to 6-phosphogluconate. This Formosa agariphila (strain DSM 15362 / KCTC 12365 / LMG 23005 / KMM 3901 / M-2Alg 35-1) protein is 6-phosphogluconolactonase (pgl).